The following is a 406-amino-acid chain: Diaminopimelate decarboxylase (406 aa).

Lysine 52 carries the post-translational modification N6-(pyridoxal phosphate)lysine. Pyridoxal 5'-phosphate is bound by residues glycine 231 and 265-268 (EPGR). Residues arginine 268, arginine 304, and tyrosine 308 each contribute to the substrate site. Cysteine 334 serves as the catalytic Proton donor. Positions 335 and 362 each coordinate substrate. Tyrosine 362 contributes to the pyridoxal 5'-phosphate binding site.

The protein belongs to the Orn/Lys/Arg decarboxylase class-II family. LysA subfamily. Homodimer. Pyridoxal 5'-phosphate is required as a cofactor.

It catalyses the reaction meso-2,6-diaminopimelate + H(+) = L-lysine + CO2. The protein operates within amino-acid biosynthesis; L-lysine biosynthesis via DAP pathway; L-lysine from DL-2,6-diaminopimelate: step 1/1. Specifically catalyzes the decarboxylation of meso-diaminopimelate (meso-DAP) to L-lysine. This Neisseria meningitidis serogroup A / serotype 4A (strain DSM 15465 / Z2491) protein is Diaminopimelate decarboxylase.